The primary structure comprises 296 residues: Thioredoxin-related transmembrane protein 2 (296 aa).

A signal peptide spans 1–48 (MAVLAPLIALVYSVPRLSRWLAQPYYLLSALLSAAFLLVRKLPPLCHG). At 49 to 102 (LPTQREDGNPCDFDWREVEILMFLSAIVMMKNRRSITVEQHIGNIFMFSKVANA) the chain is on the extracellular side. The helical transmembrane segment at 103-125 (ILFFRLDIRMGLLYITLCIVFLM) threads the bilayer. One can recognise a Thioredoxin domain in the interval 114–269 (LLYITLCIVF…LYQRAKKLSK (156 aa)). The Cytoplasmic portion of the chain corresponds to 126-296 (TCKPPLYMGP…VSDGESKKDK (171 aa)). Residues S211, S243, and S288 each carry the phosphoserine modification. A disordered region spans residues 269–296 (KAGDNIPEEQPVAPTPTRVSDGESKKDK). The Di-lysine motif motif lies at 293-296 (KKDK).

In terms of assembly, monomer. Homodimer; disulfide-linked. Occurs in both reduced and oxidized monomeric form. Oxidative conditions increase homodimerization. Interacts with CANX. Interacts with ATP2A2.

The protein localises to the endoplasmic reticulum membrane. Its subcellular location is the mitochondrion membrane. Its function is as follows. Endoplasmic reticulum and mitochondria-associated protein that probably functions as a regulator of cellular redox state and thereby regulates protein post-translational modification, protein folding and mitochondrial activity. Indirectly regulates neuronal proliferation, migration, and organization in the developing brain. This is Thioredoxin-related transmembrane protein 2 (TMX2) from Macaca fascicularis (Crab-eating macaque).